An 862-amino-acid chain; its full sequence is Taxadiene synthase (862 aa).

Mg(2+) contacts are provided by Asp-613, Asp-617, Asn-757, Thr-761, and Glu-765. Residues 613-617 (DDMAD) carry the DDXXD motif motif.

It belongs to the terpene synthase family. Mg(2+) serves as cofactor.

The enzyme catalyses (2E,6E,10E)-geranylgeranyl diphosphate = taxa-4(5),11(12)-diene + diphosphate. The protein operates within alkaloid biosynthesis; taxol biosynthesis; taxa-4(20),11-dien-5alpha-ol from geranylgeranyl diphosphate: step 1/2. Its function is as follows. Catalyzes the cyclization of the ubiquitous isoprenoid intermediate geranylgeranyl diphosphate to taxa-4,11-diene, the parent olefin with a taxane skeleton. This Taxus brevifolia (Pacific yew) protein is Taxadiene synthase (TDC1).